Reading from the N-terminus, the 101-residue chain is NADH-quinone oxidoreductase subunit K (101 aa).

Helical transmembrane passes span 4–24 (LSHY…GIFL), 30–50 (IILL…FVAF), and 61–81 (IFVF…LAIL).

It belongs to the complex I subunit 4L family. In terms of assembly, NDH-1 is composed of 14 different subunits. Subunits NuoA, H, J, K, L, M, N constitute the membrane sector of the complex.

The protein resides in the cell inner membrane. The catalysed reaction is a quinone + NADH + 5 H(+)(in) = a quinol + NAD(+) + 4 H(+)(out). Its function is as follows. NDH-1 shuttles electrons from NADH, via FMN and iron-sulfur (Fe-S) centers, to quinones in the respiratory chain. The immediate electron acceptor for the enzyme in this species is believed to be ubiquinone. Couples the redox reaction to proton translocation (for every two electrons transferred, four hydrogen ions are translocated across the cytoplasmic membrane), and thus conserves the redox energy in a proton gradient. This is NADH-quinone oxidoreductase subunit K from Nitrosomonas europaea (strain ATCC 19718 / CIP 103999 / KCTC 2705 / NBRC 14298).